The primary structure comprises 121 residues: Small ribosomal subunit protein bS6 (121 aa).

This sequence belongs to the bacterial ribosomal protein bS6 family.

Functionally, binds together with bS18 to 16S ribosomal RNA. This is Small ribosomal subunit protein bS6 from Rickettsia conorii (strain ATCC VR-613 / Malish 7).